Consider the following 138-residue polypeptide: DNA-directed RNA polymerase subunit omega (138 aa).

Residues Ala-101–Asp-138 are disordered. Residues Asp-119 to Asp-138 show a composition bias toward acidic residues.

Belongs to the RNA polymerase subunit omega family. As to quaternary structure, the RNAP catalytic core consists of 2 alpha, 1 beta, 1 beta' and 1 omega subunit. When a sigma factor is associated with the core the holoenzyme is formed, which can initiate transcription.

The enzyme catalyses RNA(n) + a ribonucleoside 5'-triphosphate = RNA(n+1) + diphosphate. Functionally, promotes RNA polymerase assembly. Latches the N- and C-terminal regions of the beta' subunit thereby facilitating its interaction with the beta and alpha subunits. The sequence is that of DNA-directed RNA polymerase subunit omega from Rhodospirillum rubrum (strain ATCC 11170 / ATH 1.1.1 / DSM 467 / LMG 4362 / NCIMB 8255 / S1).